A 116-amino-acid polypeptide reads, in one-letter code: Large ribosomal subunit protein uL18 (116 aa).

It belongs to the universal ribosomal protein uL18 family. As to quaternary structure, part of the 50S ribosomal subunit; part of the 5S rRNA/L5/L18/L25 subcomplex. Contacts the 5S and 23S rRNAs.

Functionally, this is one of the proteins that bind and probably mediate the attachment of the 5S RNA into the large ribosomal subunit, where it forms part of the central protuberance. In Mycoplasma pneumoniae (strain ATCC 29342 / M129 / Subtype 1) (Mycoplasmoides pneumoniae), this protein is Large ribosomal subunit protein uL18.